We begin with the raw amino-acid sequence, 208 residues long: Uracil phosphoribosyltransferase (208 aa).

5-phospho-alpha-D-ribose 1-diphosphate contacts are provided by residues Arg78, Arg103, and 130-138 (DPMLATGGS). Residues Ile193 and 198–200 (GDA) each bind uracil. Asp199 contributes to the 5-phospho-alpha-D-ribose 1-diphosphate binding site.

This sequence belongs to the UPRTase family. The cofactor is Mg(2+).

It catalyses the reaction UMP + diphosphate = 5-phospho-alpha-D-ribose 1-diphosphate + uracil. It participates in pyrimidine metabolism; UMP biosynthesis via salvage pathway; UMP from uracil: step 1/1. Its activity is regulated as follows. Allosterically activated by GTP. Functionally, catalyzes the conversion of uracil and 5-phospho-alpha-D-ribose 1-diphosphate (PRPP) to UMP and diphosphate. In Shewanella putrefaciens (strain CN-32 / ATCC BAA-453), this protein is Uracil phosphoribosyltransferase.